A 142-amino-acid polypeptide reads, in one-letter code: Large ribosomal subunit protein uL11 (142 aa).

Belongs to the universal ribosomal protein uL11 family. In terms of assembly, part of the ribosomal stalk of the 50S ribosomal subunit. Interacts with L10 and the large rRNA to form the base of the stalk. L10 forms an elongated spine to which L12 dimers bind in a sequential fashion forming a multimeric L10(L12)X complex. Post-translationally, one or more lysine residues are methylated.

Functionally, forms part of the ribosomal stalk which helps the ribosome interact with GTP-bound translation factors. The chain is Large ribosomal subunit protein uL11 from Serratia marcescens.